The chain runs to 263 residues: HTH-type transcriptional repressor NanR (263 aa).

The region spanning 30–98 is the HTH gntR-type domain; the sequence is KKLSEMVEEE…NGERARVSRP (69 aa). Positions 58 to 77 form a DNA-binding region, H-T-H motif; the sequence is ERELMAFFNVGRPSVREALA.

Belongs to the NanR family.

Functionally, transcriptional repressor that controls expression of the genes required for the catabolism of sialic acids. In Salmonella bongori (strain ATCC 43975 / DSM 13772 / NCTC 12419), this protein is HTH-type transcriptional repressor NanR.